Reading from the N-terminus, the 96-residue chain is Myticin-A (96 aa).

An N-terminal signal peptide occupies residues 1–20 (MKATILLAVLVAVFVAGTEA). A propeptide spans 61–96 (VNNPFRVNQVAKSINDLDYTPIMKSMENLDNGMDML) (removed in mature form).

Contains four disulfide bonds. Hemocytes.

Its subcellular location is the secreted. In terms of biological role, bacteriolytic activity against Gram-positive bacteria M.luteus, B.megaterium and A.viridans. The sequence is that of Myticin-A from Mytilus galloprovincialis (Mediterranean mussel).